We begin with the raw amino-acid sequence, 125 residues long: Glucose-1-phosphate adenylyltransferase small subunit (125 aa).

Belongs to the bacterial/plant glucose-1-phosphate adenylyltransferase family. Heterotetramer. In terms of tissue distribution, leaves.

The protein resides in the plastid. It is found in the chloroplast. Its subcellular location is the amyloplast. The catalysed reaction is alpha-D-glucose 1-phosphate + ATP + H(+) = ADP-alpha-D-glucose + diphosphate. Its pathway is glycan biosynthesis; starch biosynthesis. With respect to regulation, activated by 3'phosphoglycerate, inhibited by orthophosphate. Allosteric regulation. This protein plays a role in synthesis of starch. It catalyzes the synthesis of the activated glycosyl donor, ADP-glucose from Glc-1-P and ATP. In Zea mays (Maize), this protein is Glucose-1-phosphate adenylyltransferase small subunit (GLG1).